The primary structure comprises 82 residues: Putative antitoxin Saci_0468 (82 aa).

Belongs to the UPF0330 family.

Functionally, possibly the antitoxin component of a type II toxin-antitoxin (TA) system. The chain is Putative antitoxin Saci_0468 from Sulfolobus acidocaldarius (strain ATCC 33909 / DSM 639 / JCM 8929 / NBRC 15157 / NCIMB 11770).